The chain runs to 328 residues: Ubiquitin carboxyl-terminal hydrolase isozyme L5 (328 aa).

Positions 7-225 (EWCLMESDPG…IRFNLMAIVS (219 aa)) constitute a UCH catalytic domain. Lysine 47 is subject to N6-succinyllysine. Cysteine 88 functions as the Nucleophile in the catalytic mechanism. Residue lysine 158 is modified to N6-acetyllysine. Histidine 164 serves as the catalytic Proton donor. Lysine 288 bears the N6-succinyllysine mark. Residues 290 to 318 (NYLPFIMELLKTLAEHQQLIPLVEKAKEK) form the ULD domain. Residues 312 to 328 (VEKAKEKQNAKKAQETK) form an interaction with ADRM1 region.

It belongs to the peptidase C12 family. In terms of assembly, component of the 19S (PA700) regulatory complex of the 26S proteasome. Interacts with ADRM1 and NFRKB. Component of the INO80 complex; specifically part of a complex module associated with N-terminus of INO80.

It is found in the cytoplasm. The protein localises to the nucleus. It catalyses the reaction Thiol-dependent hydrolysis of ester, thioester, amide, peptide and isopeptide bonds formed by the C-terminal Gly of ubiquitin (a 76-residue protein attached to proteins as an intracellular targeting signal).. Activated by ADRM1. Inhibited by interaction with NFRKB. In terms of biological role, protease that specifically cleaves 'Lys-48'-linked polyubiquitin chains. Deubiquitinating enzyme associated with the 19S regulatory subunit of the 26S proteasome. Putative regulatory component of the INO80 complex; however is inactive in the INO80 complex and is activated by a transient interaction of the INO80 complex with the proteasome via ADRM1. This chain is Ubiquitin carboxyl-terminal hydrolase isozyme L5 (UCHL5), found in Bos taurus (Bovine).